A 268-amino-acid chain; its full sequence is Trypsin-like protease (268 aa).

Residues 1–41 form the signal peptide; that stretch reads MTHTTTIAAKRGGLALAKKAAAAGAVALAVASLQPVSAAHA. Residues 42 to 45 constitute a propeptide, activation peptide; the sequence is ADAR. The Peptidase S1 domain maps to 46–266; sequence VIGGKPAAQN…FAKDIAKAAS (221 aa). A disulfide bridge links Cys67 with Cys83. Catalysis depends on charge relay system residues His82 and Asp127. Disulfide bonds link Cys187-Cys202 and Cys213-Cys242. The active-site Charge relay system is the Ser217.

Belongs to the peptidase S1 family.

Functionally, protease that shows preferential cleavage after Arg and Lys residues. The sequence is that of Trypsin-like protease from Streptomyces glaucescens.